We begin with the raw amino-acid sequence, 385 residues long: Tumor protein p53-inducible protein 13 (385 aa).

The signal sequence occupies residues 1 to 27 (MVHPPPPPPRLLLVALVGLLSLREVVA). Residues 28 to 301 (EPAEEAGTPC…ARGPTPRTEE (274 aa)) are Extracellular-facing. The interval 242–297 (APVSLTTGGPGGNGRSRTEAQMPSGQGNHGGCACPGQVSPAPRAAGPPRVARGPTP) is disordered. Low complexity predominate over residues 281 to 297 (PAPRAAGPPRVARGPTP). A helical membrane pass occupies residues 302–322 (AAWAAMALTFLLVLLTLATLC). Residues 323–385 (TRLHRNFRRS…DSGPDSESSD (63 aa)) are Cytoplasmic-facing. Residues 359–369 (SRRIKRSRRRP) are compositionally biased toward basic residues. Residues 359-385 (SRRIKRSRRRPLLPPTPDSGPDSESSD) are disordered.

Its subcellular location is the cell membrane. It localises to the cytoplasm. May act as a tumor suppressor. Inhibits tumor cell growth, when overexpressed. The chain is Tumor protein p53-inducible protein 13 (Tp53i13) from Mus musculus (Mouse).